Reading from the N-terminus, the 1323-residue chain is Nck-associated protein 5-like (1323 aa).

Disordered regions lie at residues Met-1 to Glu-22, Gln-113 to Pro-142, Gln-156 to Ala-175, Pro-204 to Pro-238, Pro-260 to Leu-314, and Gly-341 to Glu-714. The interval Met-1–Glu-135 is mediates interaction with CDK5RAP2 and is required for homodimerization and microtubule bundle formation. The stretch at Glu-22 to Asn-109 forms a coiled coil. Pro residues-rich tracts occupy residues Gly-162 to Ala-172 and Cys-226 to Trp-236. The segment covering Ala-271 to Ser-298 has biased composition (low complexity). Pro residues predominate over residues Pro-353–Pro-364. A phosphoserine; by CDK1 mark is found at Ser-436, Ser-447, Ser-466, and Ser-473. The short motif at Ser-480–Pro-483 is the (S/T)X(I/L)P motif 1 element. Phosphoserine is present on residues Ser-489, Ser-492, and Ser-494. Polar residues predominate over residues Leu-531–Leu-542. Ser-573 bears the Phosphoserine; by CDK1 mark. The span at Arg-647–Leu-660 shows a compositional bias: basic and acidic residues. Thr-654 carries the phosphothreonine modification. Positions Arg-743–Lys-1136 are mediates interaction with beta-tubulin and is required for microtubule bundle formation. Ser-760 is modified (phosphoserine; by CDK1). Disordered regions lie at residues Ala-778–Ile-875, Gly-892–Thr-948, Ala-979–Gln-1003, and Lys-1027–Gly-1323. Residues Lys-799–Lys-817 are compositionally biased toward low complexity. The (S/T)X(I/L)P motif 2 signature appears at Thr-808–Pro-811. The (S/T)X(I/L)P motif 3; required for interaction with MAPRE1 signature appears at Ser-918–Pro-921. A compositionally biased stretch (basic and acidic residues) spans Arg-925–Asp-934. Residues Leu-942–Arg-985 adopt a coiled-coil conformation. A compositionally biased stretch (basic and acidic residues) spans Lys-1027–Tyr-1041. 2 stretches are compositionally biased toward polar residues: residues Val-1097–Leu-1112 and His-1124–Lys-1136. Residues Asp-1143–Pro-1153 are compositionally biased toward pro residues. Position 1184 is a phosphoserine (Ser-1184). 2 stretches are compositionally biased toward polar residues: residues Thr-1225 to Asp-1237 and Val-1264 to Gln-1273. Residues Leu-1302–Gly-1323 are compositionally biased toward low complexity.

In terms of assembly, homodimer. Interacts with CDK5RAP2. Interacts with MAPRE1. Interacts with beta-tubulin. In terms of processing, CDK1/Cyclin B-dependent phosphorylation mediates its dissociation from centrosomes during mitosis.

Its subcellular location is the cytoplasm. The protein localises to the cytoskeleton. It localises to the microtubule organizing center. The protein resides in the centrosome. Functionally, regulates microtubule organization and stabilization. Promotes microtubule growth and bundling formation and stabilizes microtubules by increasing intense acetylation of microtubules. Both tubulin-binding and homodimer formation are required for NCKAP5L-mediated microtubule bundle formation. The sequence is that of Nck-associated protein 5-like (Nckap5l) from Mus musculus (Mouse).